The following is a 728-amino-acid chain: Prolyl 3-hydroxylase 1 (728 aa).

A signal peptide spans Met-1–Ala-14. 4 TPR repeats span residues Pro-25 to Leu-58, Arg-135 to His-168, His-197 to Ala-230, and Pro-293 to Asp-326. Asn-308 carries N-linked (GlcNAc...) asparagine glycosylation. A coiled-coil region spans residues Lys-393–Ser-431. Residues Asn-450, Asn-459, and Asn-532 are each glycosylated (N-linked (GlcNAc...) asparagine). Positions Ser-556–Leu-670 constitute a Fe2OG dioxygenase domain. Residues His-579, Asp-581, and His-651 each contribute to the Fe cation site. The active site involves Arg-661. Residues Ser-691 to Leu-728 are disordered. Over residues Pro-698 to Gln-707 the composition is skewed to low complexity. A compositionally biased stretch (basic and acidic residues) spans Pro-712–Leu-728. Residues Lys-725–Leu-728 carry the Prevents secretion from ER motif.

Belongs to the leprecan family. Fe cation serves as cofactor. The cofactor is L-ascorbate. In terms of processing, O-glycosylated; chondroitin sulfate. Expressed in basement membranes of cardiac muscle, skeletal muscle, central nervous system, intestinal tract, trachea, ear, skin, liver and kidney. In kidney, localizes to the glomerular basement membrane, mesangial matrix and Bowman's capsule of the nephron. In the renal parenchyma, expressed in the basement membranes of tubules and blood vessels. In the ear and trachea, localizes to the perimeter of resident chondrocytes in lacunae.

The protein localises to the endoplasmic reticulum. The protein resides in the secreted. It localises to the extracellular space. It is found in the extracellular matrix. The enzyme catalyses L-prolyl-[collagen] + 2-oxoglutarate + O2 = trans-3-hydroxy-L-prolyl-[collagen] + succinate + CO2. Basement membrane-associated chondroitin sulfate proteoglycan (CSPG). Has prolyl 3-hydroxylase activity catalyzing the post-translational formation of 3-hydroxyproline in -Xaa-Pro-Gly- sequences in collagens, especially types IV and V. May be involved in the secretory pathway of cells. Has growth suppressive activity in fibroblasts. The chain is Prolyl 3-hydroxylase 1 from Rattus norvegicus (Rat).